The primary structure comprises 109 residues: Large ribosomal subunit protein uL23 (109 aa).

This sequence belongs to the universal ribosomal protein uL23 family. As to quaternary structure, part of the 50S ribosomal subunit. Contacts protein L29, and trigger factor when it is bound to the ribosome.

In terms of biological role, one of the early assembly proteins it binds 23S rRNA. One of the proteins that surrounds the polypeptide exit tunnel on the outside of the ribosome. Forms the main docking site for trigger factor binding to the ribosome. The sequence is that of Large ribosomal subunit protein uL23 from Chlorobium phaeobacteroides (strain BS1).